The chain runs to 827 residues: MSSPDDFETAPAEYVDALDPSMVVVDSGSAAVTAPSDSAAEVKANQNEENTGATAAETSEKVDQTEVEKKDDDDTTEVGVTTTTPSIADTAATANIASTSGASVTEPTTDDTAADEKKEQVSGPPLSNMKFYLNRDADAHDSLNDIDQLARLIRANGGEVLDSKPRESKENVFIVSPYNHTNLPTVTPTYIKACCQSNSLLNMENYLVPYDNFREVVDSRLQEESHSNGVDNSNSNSDNKDSIRPKTEIISTNTNGATEDSTSEKVMVDAEQQARLQEQAQLLRQHVSSTASITSGGHNDLVQIEQPQKDTSNNNNSNVNDEDNDLLTQDNNPQTADEGNASFQAQRSMISRGALPSHNKASFTDEEDEFILDVVRKNPTRRTTHTLYDEISHYVPNHTGNSIRHRFRVYLSKRLEYVYEVDKFGKLVRDDDGNLIKTKVLPPSIKRKFSADEDYTLAIAVKKQFYRDLFQIDPDTGRSLITDEDTPTAIARRNMTMDPNHVPGSEPNFAAYRTQSRRGPIAREFFKHFAEEHAAHTENAWRDRFRKFLLAYGIDDYISYYEAEKAQNREPEPMKNLTNRPKRPGVPTPGNYNSAAKRARNYSSQRNVQPTANAASANAAAAAAAAASNSYAIPENELLDEDTMNFISSLKNDLSNISNSLPFEYPHEIAEAIRSDFSNEDIYDNIDPDTISFPPKIATTDLFLPLFFHFGSTRQFMDKLHEVISGDYEPSQAEKLVQDLCDETGIRKNFSTSILTCLSGDLMVFPRYFLNMFKDNVNPPPNVPGIWTHDDDESLKSNDQEQIRKLVKKHGTGRMEMRKRFFEKDLL.

3 disordered regions span residues 29–128 (SAAV…PLSN), 221–268 (LQEE…KVMV), and 308–339 (QKDT…ADEG). Over residues 44–57 (ANQNEENTGATAAE) the composition is skewed to polar residues. Basic and acidic residues predominate over residues 58–72 (TSEKVDQTEVEKKDD). Over residues 92–107 (ATANIASTSGASVTEP) the composition is skewed to polar residues. Residues 121 to 208 (VSGPPLSNMK…SLLNMENYLV (88 aa)) enclose the BRCT domain. A compositionally biased stretch (low complexity) spans 227–237 (SNGVDNSNSNS). Residues 238–247 (DNKDSIRPKT) show a composition bias toward basic and acidic residues. Polar residues predominate over residues 249–260 (IISTNTNGATED). The span at 310–319 (DTSNNNNSNV) shows a compositional bias: low complexity. Positions 326–339 (LLTQDNNPQTADEG) are enriched in polar residues. Residues 355–415 (LPSHNKASFT…RFRVYLSKRL (61 aa)) enclose the HTH myb-type domain. Positions 388–411 (YDEISHYVPNHTGNSIRHRFRVYL) form a DNA-binding region, H-T-H motif. At threonine 486 the chain carries Phosphothreonine. The tract at residues 567 to 613 (QNREPEPMKNLTNRPKRPGVPTPGNYNSAAKRARNYSSQRNVQPTAN) is disordered. The segment covering 601 to 611 (NYSSQRNVQPT) has biased composition (polar residues). The activation domain stretch occupies residues 630–695 (SYAIPENELL…IDPDTISFPP (66 aa)). Serine 731 is subject to Phosphoserine.

This sequence belongs to the RAP1 family. Interacts (via C-terminus) with RIF1. Interacts (via C-terminus) with SIR3. Interacts (via C-terminus) with SIR4. Interacts with a GCR1 homodimer.

It localises to the nucleus. The protein localises to the chromosome. The protein resides in the telomere. Essential regulatory protein in yeast whose DNA-binding sites are found at three types of chromosomal elements: promoters, silencers, and telomeres. RAP1 is also involved in the regulation of telomere structure, where its binding sites are found within the terminal poly[C(1-3)A] sequences. The opposite regulatory functions of RAP1 are not intrinsic to its binding sites but, instead, result from interactions with different factors at promoters and silencers. RAP1 mediates repression of the HM loci and telomeres by recruiting the SIR complex. May also target the binding of RIF1 and RIF2 to silencers and telomeres. Forms with GCR1 a transcriptional activation complex that is required for expression of glycolytic and ribosomal gene. The polypeptide is DNA-binding protein RAP1 (RAP1) (Saccharomyces cerevisiae (strain ATCC 204508 / S288c) (Baker's yeast)).